The chain runs to 125 residues: Anticoagulant salivary protein 14 (125 aa).

The signal sequence occupies residues 1–21; sequence MGLTGTMLVLVSLAFFGSAAA. N-linked (GlcNAc...) asparagine glycosylation is found at Asn26, Asn81, and Asn87. The span at 75 to 86 shows a compositional bias: polar residues; the sequence is GECHLTNNSGGP. Residues 75-125 are disordered; that stretch reads GECHLTNNSGGPNETDDYTPAPTEKPKQKKKKTKKTKKPKRKSKKDQEKNL. A responsible for anticoagulant activity region spans residues 91–125; the sequence is DYTPAPTEKPKQKKKKTKKTKKPKRKSKKDQEKNL. A compositionally biased stretch (basic residues) spans 101–118; it reads KQKKKKTKKTKKPKRKSK.

It belongs to the salp14 family. As to expression, salivary gland (at protein level). Saliva (at protein level).

It is found in the secreted. Salivary anticoagulant protein that facilitates blood feeding of adult ticks on vertebrate species. Inhibits host coagulation factor Xa (F10). Blocks the assembly and/or early activity of the prothrombinase complex (Xa-Va/F10-F5). Inhibits the lectin pathway of complement system activation in the host. The polypeptide is Anticoagulant salivary protein 14 (Ixodes scapularis (Black-legged tick)).